Consider the following 300-residue polypeptide: Protoheme IX farnesyltransferase (300 aa).

9 helical membrane-spanning segments follow: residues 24–44, 46–66, 94–114, 118–138, 146–166, 172–192, 217–237, 239–259, and 278–298; these read VTQL…PGMV, WHVL…AFAI, PQIL…LYTF, LTMW…TLLL, IVIG…AVTG, AWIL…VLAL, LHIL…FISG, SGAV…AYAW, and IVYL…RPLL.

It belongs to the UbiA prenyltransferase family. Protoheme IX farnesyltransferase subfamily.

It localises to the cell inner membrane. It carries out the reaction heme b + (2E,6E)-farnesyl diphosphate + H2O = Fe(II)-heme o + diphosphate. It participates in porphyrin-containing compound metabolism; heme O biosynthesis; heme O from protoheme: step 1/1. In terms of biological role, converts heme B (protoheme IX) to heme O by substitution of the vinyl group on carbon 2 of heme B porphyrin ring with a hydroxyethyl farnesyl side group. This is Protoheme IX farnesyltransferase from Burkholderia lata (strain ATCC 17760 / DSM 23089 / LMG 22485 / NCIMB 9086 / R18194 / 383).